The primary structure comprises 740 residues: Alpha-1,6-mannosylglycoprotein 6-beta-N-acetylglucosaminyltransferase A (740 aa).

The Cytoplasmic portion of the chain corresponds to 1-13; it reads MAFFSPWKLSSQK. Residues 14-30 form a helical; Signal-anchor for type II membrane protein membrane-spanning segment; the sequence is LGFFLVTFGFIWGMMLL. Residues 31–740 are Lumenal-facing; sequence HFTIQQRTQP…GQVALCKDCL (710 aa). N-linked (GlcNAc...) asparagine glycosylation is found at Asn-109, Asn-114, and Asn-117. 9 disulfides stabilise this stretch: Cys-144–Cys-182, Cys-155–Cys-195, Cys-171–Cys-337, Cys-371–Cys-625, Cys-648–Cys-723, Cys-652–Cys-725, Cys-659–Cys-712, Cys-680–Cys-701, and Cys-736–Cys-739. The segment at 212 to 740 is sufficient for catalytic activity; sequence NSLAEIRTDF…GQVALCKDCL (529 aa). The N-linked (GlcNAc...) asparagine glycan is linked to Asn-333. 377 to 378 is a substrate binding site; it reads DS. Asn-432 and Asn-446 each carry an N-linked (GlcNAc...) asparagine glycan. A UDP-N-acetyl-alpha-D-glucosamine-binding site is contributed by Glu-525. Lys-553 contributes to the substrate binding site.

Belongs to the glycosyltransferase 18 family. Post-translationally, N-glycosylated. In terms of processing, a secreted form is released from the membrane after cleavage by gamma-secretase. Detected in kidney (at protein level). Detected in kidney.

It is found in the golgi apparatus membrane. It localises to the secreted. The enzyme catalyses N(4)-{beta-D-GlcNAc-(1-&gt;2)-[beta-D-GlcNAc-(1-&gt;4)]-alpha-D-Man-(1-&gt;3)-[beta-D-GlcNAc-(1-&gt;2)-alpha-D-Man-(1-&gt;6)]-beta-D-Man-(1-&gt;4)-beta-D-GlcNAc-(1-&gt;4)-beta-D-GlcNAc}-L-asparaginyl-[protein] + UDP-N-acetyl-alpha-D-glucosamine = N(4)-{beta-D-GlcNAc-(1-&gt;2)-[beta-D-GlcNAc-(1-&gt;4)]-alpha-D-Man-(1-&gt;3)-[beta-D-GlcNAc-(1-&gt;2)-[beta-D-GlcNAc-(1-&gt;6)]-alpha-D-Man-(1-&gt;6)]-beta-D-Man-(1-&gt;4)-beta-D-GlcNAc-(1-&gt;4)-beta-D-GlcNAc}-L-asparaginyl-[protein] + UDP + H(+). It functions in the pathway protein modification; protein glycosylation. Catalyzes the addition of N-acetylglucosamine (GlcNAc) in beta 1-6 linkage to the alpha-linked mannose of biantennary N-linked oligosaccharides. Catalyzes an important step in the biosynthesis of branched, complex-type N-glycans, such as those found on EGFR, TGFR (TGF-beta receptor) and CDH2. Via its role in the biosynthesis of complex N-glycans, plays an important role in the activation of cellular signaling pathways, reorganization of the actin cytoskeleton, cell-cell adhesion and cell migration. MGAT5-dependent EGFR N-glycosylation enhances the interaction between EGFR and LGALS3 and thereby prevents rapid EGFR endocytosis and prolongs EGFR signaling. Required for efficient interaction between TGFB1 and its receptor. Enhances activation of intracellular signaling pathways by several types of growth factors, including FGF2, PDGF, IGF, TGFB1 and EGF. MGAT5-dependent CDH2 N-glycosylation inhibits CDH2-mediated homotypic cell-cell adhesion and contributes to the regulation of downstream signaling pathways. Promotes cell migration. Contributes to the regulation of the inflammatory response. MGAT5-dependent TCR N-glycosylation enhances the interaction between TCR and LGALS3, limits agonist-induced TCR clustering, and thereby dampens TCR-mediated responses to antigens. Required for normal leukocyte evasation and accumulation at sites of inflammation. Inhibits attachment of monocytes to the vascular endothelium and subsequent monocyte diapedesis. Functionally, promotes proliferation of umbilical vein endothelial cells and angiogenesis, at least in part by promoting the release of the growth factor FGF2 from the extracellular matrix. The polypeptide is Alpha-1,6-mannosylglycoprotein 6-beta-N-acetylglucosaminyltransferase A (Mgat5) (Rattus norvegicus (Rat)).